Reading from the N-terminus, the 379-residue chain is UDP-N-acetylglucosamine--N-acetylmuramyl-(pentapeptide) pyrophosphoryl-undecaprenol N-acetylglucosamine transferase (379 aa).

UDP-N-acetyl-alpha-D-glucosamine is bound by residues 10–12, Asn-124, and Arg-165; that span reads TGG. Residues 174-195 form a disordered region; it reads TRDQGPGIRDQEKHMTDSTGPA. Residues Ser-211, Ile-266, and Gln-311 each contribute to the UDP-N-acetyl-alpha-D-glucosamine site.

This sequence belongs to the glycosyltransferase 28 family. MurG subfamily.

It localises to the cell inner membrane. It carries out the reaction di-trans,octa-cis-undecaprenyl diphospho-N-acetyl-alpha-D-muramoyl-L-alanyl-D-glutamyl-meso-2,6-diaminopimeloyl-D-alanyl-D-alanine + UDP-N-acetyl-alpha-D-glucosamine = di-trans,octa-cis-undecaprenyl diphospho-[N-acetyl-alpha-D-glucosaminyl-(1-&gt;4)]-N-acetyl-alpha-D-muramoyl-L-alanyl-D-glutamyl-meso-2,6-diaminopimeloyl-D-alanyl-D-alanine + UDP + H(+). The protein operates within cell wall biogenesis; peptidoglycan biosynthesis. Cell wall formation. Catalyzes the transfer of a GlcNAc subunit on undecaprenyl-pyrophosphoryl-MurNAc-pentapeptide (lipid intermediate I) to form undecaprenyl-pyrophosphoryl-MurNAc-(pentapeptide)GlcNAc (lipid intermediate II). In Pelobacter propionicus (strain DSM 2379 / NBRC 103807 / OttBd1), this protein is UDP-N-acetylglucosamine--N-acetylmuramyl-(pentapeptide) pyrophosphoryl-undecaprenol N-acetylglucosamine transferase.